A 553-amino-acid polypeptide reads, in one-letter code: Formate--tetrahydrofolate ligase (553 aa).

64 to 71 provides a ligand contact to ATP; sequence TPAGEGKT.

This sequence belongs to the formate--tetrahydrofolate ligase family.

It carries out the reaction (6S)-5,6,7,8-tetrahydrofolate + formate + ATP = (6R)-10-formyltetrahydrofolate + ADP + phosphate. Its pathway is one-carbon metabolism; tetrahydrofolate interconversion. The protein is Formate--tetrahydrofolate ligase of Pseudothermotoga lettingae (strain ATCC BAA-301 / DSM 14385 / NBRC 107922 / TMO) (Thermotoga lettingae).